The sequence spans 166 residues: Interferon gamma (166 aa).

The N-terminal stretch at 1–23 (MKYTSYFLALLLCVLLGFSGSYG) is a signal peptide. Pyrrolidone carboxylic acid is present on Q24. N39 and N106 each carry an N-linked (GlcNAc...) asparagine glycan.

This sequence belongs to the type II (or gamma) interferon family. Homodimer. Interacts with IFNGR1 (via extracellular domain); this interaction promotes IFNGR1 dimerization. In terms of tissue distribution, released primarily from activated T lymphocytes.

The protein localises to the secreted. Functionally, type II interferon produced by immune cells such as T-cells and NK cells that plays crucial roles in antimicrobial, antiviral, and antitumor responses by activating effector immune cells and enhancing antigen presentation. Primarily signals through the JAK-STAT pathway after interaction with its receptor IFNGR1 to affect gene regulation. Upon IFNG binding, IFNGR1 intracellular domain opens out to allow association of downstream signaling components JAK2, JAK1 and STAT1, leading to STAT1 activation, nuclear translocation and transcription of IFNG-regulated genes. Many of the induced genes are transcription factors such as IRF1 that are able to further drive regulation of a next wave of transcription. Plays a role in class I antigen presentation pathway by inducing a replacement of catalytic proteasome subunits with immunoproteasome subunits. In turn, increases the quantity, quality, and repertoire of peptides for class I MHC loading. Increases the efficiency of peptide generation also by inducing the expression of activator PA28 that associates with the proteasome and alters its proteolytic cleavage preference. Up-regulates as well MHC II complexes on the cell surface by promoting expression of several key molecules such as cathepsins B/CTSB, H/CTSH, and L/CTSL. Participates in the regulation of hematopoietic stem cells during development and under homeostatic conditions by affecting their development, quiescence, and differentiation. In Bubalus carabanensis (Swamp type water buffalo), this protein is Interferon gamma (IFNG).